The chain runs to 255 residues: Ribonuclease HII (255 aa).

In terms of domain architecture, RNase H type-2 spans Gln72 to Glu255. A divalent metal cation is bound by residues Asp78, Glu79, and Asp170.

This sequence belongs to the RNase HII family. The cofactor is Mn(2+). It depends on Mg(2+) as a cofactor.

The protein localises to the cytoplasm. The enzyme catalyses Endonucleolytic cleavage to 5'-phosphomonoester.. In terms of biological role, endonuclease that specifically degrades the RNA of RNA-DNA hybrids. This chain is Ribonuclease HII, found in Bacillus licheniformis (strain ATCC 14580 / DSM 13 / JCM 2505 / CCUG 7422 / NBRC 12200 / NCIMB 9375 / NCTC 10341 / NRRL NRS-1264 / Gibson 46).